Here is an 890-residue protein sequence, read N- to C-terminus: DNA mismatch repair protein MutS (890 aa).

Residue 646-653 (GPNMAGKS) participates in ATP binding.

It belongs to the DNA mismatch repair MutS family.

In terms of biological role, this protein is involved in the repair of mismatches in DNA. It is possible that it carries out the mismatch recognition step. This protein has a weak ATPase activity. This is DNA mismatch repair protein MutS from Hyphomonas neptunium (strain ATCC 15444).